Here is a 603-residue protein sequence, read N- to C-terminus: Ribosome-inactivating protein PMRIPt (603 aa).

Residues 1 to 39 (MRVVAGILYIVVMAICGLGIQGGTLQDYPSVYFQDSTLQ) form the signal peptide. Asn-74 and Asn-168 each carry an N-linked (GlcNAc...) asparagine glycan. Residue Glu-208 is part of the active site. 3 disulfide bridges follow: Cys-297-Cys-335, Cys-351-Cys-370, and Cys-392-Cys-409. Ricin B-type lectin domains lie at 338–466 (GEPT…VGDD) and 467–593 (VEPI…WMTM). The stretch at 348-388 (DGLCMDVRNESNNDGIPIQLWPCGAQRNQQWTFHTDGTIQS) is one 1-alpha repeat. N-linked (GlcNAc...) asparagine glycosylation is found at Asn-356 and Asn-408. Residues 389–430 (MGKCMTSNGYHPGDYVMIFNCSTAPVPDATKWVVSIDGSITN) form a 1-beta repeat. The 1-gamma repeat unit spans residues 433 to 466 (SGLVLTAPQAAQTTILLVVRNTHSAKQGRSVGDD). Residues 478–516 (KYMCLQGNNENNTRVWLEDCAVDRPQQWWALYSDGTIRV) form a 2-alpha repeat. Intrachain disulfides connect Cys-481-Cys-497 and Cys-523-Cys-540. An N-linked (GlcNAc...) asparagine glycan is attached at Asn-488. The stretch at 520 to 558 (RSLCVTSDGHSSRDAIIILTCDGGINQRLVFNTDGTILN) is one 2-beta repeat. The stretch at 561–597 (AQLVMDVRQSNVALRQIILYQPTGNPNQQWMTMITRT) is one 2-gamma repeat.

This sequence belongs to the ribosome-inactivating protein family. Type 2 RIP subfamily. In terms of assembly, tetramer of four pairs of disulfide bound A-B chains. The precursor is processed in two chains, A and B, that are linked by a disulfide bond. Post-translationally, glycosylated. Expressed in rhizome and more abundantly in leaves (at protein level).

It carries out the reaction Endohydrolysis of the N-glycosidic bond at one specific adenosine on the 28S rRNA.. With respect to regulation, strongly inhibited by asialofetuin and asialomucin. GalNAc-specific agglutinin. Behaves as a type-2 ribosome-inactivating protein. Inhibits mammalian ribosomes. The A chain is responsible for inhibiting protein synthesis through the catalytic inactivation of 60S ribosomal subunits by removing adenine from position 4,324 of 28S rRNA. The B chain binds to cell receptors and probably facilitates the entry into the cell of the A chain; B chains are also responsible for cell agglutination (lectin activity). Involved in plant defense against insects. Has very low cytotoxic activity against the human tumor cell lines CEM and Molt4. This chain is Ribosome-inactivating protein PMRIPt, found in Polygonatum multiflorum (Solomon's seal).